We begin with the raw amino-acid sequence, 252 residues long: 5-oxoprolinase subunit A (252 aa).

It belongs to the LamB/PxpA family. As to quaternary structure, forms a complex composed of PxpA, PxpB and PxpC.

The catalysed reaction is 5-oxo-L-proline + ATP + 2 H2O = L-glutamate + ADP + phosphate + H(+). In terms of biological role, catalyzes the cleavage of 5-oxoproline to form L-glutamate coupled to the hydrolysis of ATP to ADP and inorganic phosphate. This Corynebacterium glutamicum (strain ATCC 13032 / DSM 20300 / JCM 1318 / BCRC 11384 / CCUG 27702 / LMG 3730 / NBRC 12168 / NCIMB 10025 / NRRL B-2784 / 534) protein is 5-oxoprolinase subunit A.